The chain runs to 254 residues: uncharacterized protein (254 aa).

Helical transmembrane passes span 41 to 61, 64 to 84, 91 to 111, 125 to 145, 146 to 166, 172 to 192, 204 to 224, and 232 to 252; these read VFVFIFFLLAATISFTQIKII, IFQAPAIGIKFLQLAPGEYFF, IYCGIVATTPFGVYQVILYIL, ILIGSIVLFIVGGIFAYFVLA, PAALNFLISYGADIVEPLWSF, FILLLLFSTGLAFEIPIIQLL, MLLAWRYIIIISTIIGAVLTP, and IIMSSAVLALYFSGVIILFLL.

The protein belongs to the TatC family.

Its subcellular location is the plastid. It is found in the chloroplast membrane. This is an uncharacterized protein from Porphyra purpurea (Red seaweed).